We begin with the raw amino-acid sequence, 242 residues long: Thymocyte nuclear protein 1 (242 aa).

The disordered stretch occupies residues methionine 1–glycine 64. Residues arginine 6 to lysine 10 carry the Nuclear localization signal motif. Residues lysine 10–glutamate 27 are compositionally biased toward basic and acidic residues. The segment covering glutamate 28–glutamate 37 has biased composition (acidic residues).

Undergoes proteolytic processing during lymphocyte apoptosis. Post-translationally, phosphorylated. As to expression, expressed at high levels in bursa of fabricus, thymus and spleen. Also found in the liver, intestine, heart and brain.

It is found in the nucleus. Its function is as follows. Specifically binds 5-hydroxymethylcytosine (5hmC), suggesting that it acts as a specific reader of 5hmC. The polypeptide is Thymocyte nuclear protein 1 (THYN1) (Gallus gallus (Chicken)).